Reading from the N-terminus, the 250-residue chain is Ditrans,polycis-undecaprenyl-diphosphate synthase ((2E,6E)-farnesyl-diphosphate specific) (250 aa).

The active site involves Asp20. Asp20 is a binding site for Mg(2+). Substrate is bound by residues 21–24, Trp25, Arg33, His37, and 65–67; these read GNGR and SSE. The active-site Proton acceptor is the Asn68. Substrate contacts are provided by residues Trp69, Arg71, Arg188, and 194 to 196; that span reads RIS. Glu207 lines the Mg(2+) pocket.

The protein belongs to the UPP synthase family. As to quaternary structure, homodimer. Mg(2+) is required as a cofactor.

It carries out the reaction 8 isopentenyl diphosphate + (2E,6E)-farnesyl diphosphate = di-trans,octa-cis-undecaprenyl diphosphate + 8 diphosphate. Functionally, catalyzes the sequential condensation of isopentenyl diphosphate (IPP) with (2E,6E)-farnesyl diphosphate (E,E-FPP) to yield (2Z,6Z,10Z,14Z,18Z,22Z,26Z,30Z,34E,38E)-undecaprenyl diphosphate (di-trans,octa-cis-UPP). UPP is the precursor of glycosyl carrier lipid in the biosynthesis of bacterial cell wall polysaccharide components such as peptidoglycan and lipopolysaccharide. This chain is Ditrans,polycis-undecaprenyl-diphosphate synthase ((2E,6E)-farnesyl-diphosphate specific), found in Vibrio cholerae serotype O1 (strain ATCC 39315 / El Tor Inaba N16961).